Reading from the N-terminus, the 80-residue chain is DinI-like protein Z2083/ECs2153 (80 aa).

The polypeptide is DinI-like protein Z2083/ECs2153 (Escherichia coli O157:H7).